We begin with the raw amino-acid sequence, 326 residues long: Vitamin B12 import system permease protein BtuC (326 aa).

The next 9 membrane-spanning stretches (helical) occupy residues 19–39 (LSVL…LWIL), 61–81 (LAVL…QALF), 88–108 (PGLL…VLLG), 112–132 (LPNW…TLIL), 146–166 (LLAG…AIYF), 184–204 (GGVD…LLWI), 240–260 (GWMV…GLVI), 274–294 (VLLP…DIVA), and 302–322 (ELPI…WLLL).

The protein belongs to the binding-protein-dependent transport system permease family. FecCD subfamily. The complex is composed of two ATP-binding proteins (BtuD), two transmembrane proteins (BtuC) and a solute-binding protein (BtuF).

It is found in the cell inner membrane. Its function is as follows. Part of the ABC transporter complex BtuCDF involved in vitamin B12 import. Involved in the translocation of the substrate across the membrane. The sequence is that of Vitamin B12 import system permease protein BtuC from Escherichia coli O6:K15:H31 (strain 536 / UPEC).